The following is a 953-amino-acid chain: MDYKKSLNLPDTPFPMRGDLAKREPGWVAEWEETQVYQAIRAASRGRPRFVLHDGPPYANGDIHIGHAVNKILKDIIVKSRNMAGYDAHYVPGWDCHGMPIEIQIEKKYGKHLPVTEVQSKARAYALEQIDRQRKDFKRLGVLGDWHNPYLTMNFSNEADEIRVLGRILEKGYVFRGLKPVNWCFDCGSALAEAEVEYADRVDPAIDVAFPFTDRGALARAFGLDEVDAGAIVIWTTTPWTIPSNQALNVHPEIDYALVRVTPTPVHGPLLLLAQERVEPSLKAWGLEGEIIATAKGEALEGLRFRHPLAAAAQGYDRTSPIYLGDYVTLDTGTGVVHSAPAYGIEDFVSCKAHGLADSDILGPVMGDGKFVDSLPLFGGLSIWDANPRIVEALKLAGSLMLVQKLSHSYMHCWRHKTPVIYRATSQWFAGMDVKPRDGGPSLRESALAGIDATAFYPAWGRARLHAMIANRPDWTLSRQRQWGVPMAFFVHKETGELHPRTVELLEQVAQRVEKGGIEAWQSLDPRELLGDEAELYEKNRDTLDVWFDSGSTHATVLGGKDGVLGSSHGAELAWPADLYLEGSDQHRGWFHSSLLTGCMLYGHPPYKGLLTHGFVVDGQGRKMSKSVGNVIAPQKVSDSLGAEILRLWVASTDYSGELSISDEILKRVVESYRRIRNTLRFLLANVADFDAVGQAVPYGELFEIDRYALAMTAQMQAEVQGHYERYDFHPAVSRLQTFCSEDLGAFYLDILKDRLYTTAAGSAARRSAQTALLDITQTLLKLMAPILSFTAEEAWKVLAGSALAKQADAPRVTIFTEVYHALPPFADGEALTAKWTRLRAIRAEVQRKLEEVRSAGAIGSSLQAEVDLYANAADHDILASLGDDLRFVLIVSRATVHADADDLRIEIAASGHKKCERCWHWRPDVGQDADHPEICGRCVSNLFGAGEPRTRA.

Residues 57-67 carry the 'HIGH' region motif; the sequence is PYANGDIHIGH. Residue Glu582 participates in L-isoleucyl-5'-AMP binding. Positions 623-627 match the 'KMSKS' region motif; the sequence is KMSKS. ATP is bound at residue Lys626. 4 residues coordinate Zn(2+): Cys916, Cys919, Cys936, and Cys939.

It belongs to the class-I aminoacyl-tRNA synthetase family. IleS type 1 subfamily. As to quaternary structure, monomer. Requires Zn(2+) as cofactor.

The protein resides in the cytoplasm. It catalyses the reaction tRNA(Ile) + L-isoleucine + ATP = L-isoleucyl-tRNA(Ile) + AMP + diphosphate. Its function is as follows. Catalyzes the attachment of isoleucine to tRNA(Ile). As IleRS can inadvertently accommodate and process structurally similar amino acids such as valine, to avoid such errors it has two additional distinct tRNA(Ile)-dependent editing activities. One activity is designated as 'pretransfer' editing and involves the hydrolysis of activated Val-AMP. The other activity is designated 'posttransfer' editing and involves deacylation of mischarged Val-tRNA(Ile). This is Isoleucine--tRNA ligase from Bordetella parapertussis (strain 12822 / ATCC BAA-587 / NCTC 13253).